A 283-amino-acid chain; its full sequence is D-alanine aminotransferase (283 aa).

Y31 serves as a coordination point for substrate. R50 is a binding site for pyridoxal 5'-phosphate. Substrate is bound by residues R98 and H100. K144 acts as the Proton acceptor in catalysis. K144 carries the N6-(pyridoxal phosphate)lysine modification. Pyridoxal 5'-phosphate is bound at residue E176.

It belongs to the class-IV pyridoxal-phosphate-dependent aminotransferase family. In terms of assembly, homodimer. Requires pyridoxal 5'-phosphate as cofactor.

It catalyses the reaction D-alanine + 2-oxoglutarate = D-glutamate + pyruvate. Functionally, acts on the D-isomers of alanine, leucine, aspartate, glutamate, aminobutyrate, norvaline and asparagine. The enzyme transfers an amino group from a substrate D-amino acid to the pyridoxal phosphate cofactor to form pyridoxamine and an alpha-keto acid in the first half-reaction. The second half-reaction is the reverse of the first, transferring the amino group from the pyridoxamine to a second alpha-keto acid to form the product D-amino acid via a ping-pong mechanism. This is an important process in the formation of D-alanine and D-glutamate, which are essential bacterial cell wall components. The sequence is that of D-alanine aminotransferase (dat) from Bacillus licheniformis.